We begin with the raw amino-acid sequence, 533 residues long: Glucose-6-phosphate exchanger SLC37A1 (533 aa).

A helical membrane pass occupies residues Gln-18–Ser-38. N-linked (GlcNAc...) asparagine glycosylation is present at Asn-81. 4 helical membrane passes run Gly-100–Ile-120, Tyr-129–Phe-149, Phe-157–Val-177, and Ser-222–Ile-242. N-linked (GlcNAc...) asparagine glycosylation is present at Asn-263. The next 7 helical transmembrane spans lie at Val-304 to Leu-324, Leu-334 to Ile-354, Gly-366 to Ile-386, Ala-394 to Val-414, Ile-423 to Ala-443, Ala-466 to Leu-486, and Gly-490 to Ile-510.

It belongs to the major facilitator superfamily. Organophosphate:Pi antiporter (OPA) (TC 2.A.1.4) family. In terms of tissue distribution, expressed in numerous tissues, with highest expression in pancreas, kidney, bone marrow, spleen, liver, small intestine, as well as in fetal brain, liver and spleen.

It is found in the endoplasmic reticulum membrane. It catalyses the reaction D-glucose 6-phosphate(in) + phosphate(out) = D-glucose 6-phosphate(out) + phosphate(in). Inhibited by vanadate but not by chlorogenic acid. Functionally, inorganic phosphate and glucose-6-phosphate antiporter. May transport cytoplasmic glucose-6-phosphate into the lumen of the endoplasmic reticulum and translocate inorganic phosphate into the opposite direction. Independent of a lumenal glucose-6-phosphatase. May not play a role in homeostatic regulation of blood glucose levels. This chain is Glucose-6-phosphate exchanger SLC37A1, found in Homo sapiens (Human).